The primary structure comprises 244 residues: Tyrosine recombinase XerD-like (244 aa).

A Core-binding (CB) domain is found at 1 to 73; it reads MRDRISAFLE…ACNQFLYFLY (73 aa). Residues 90–244 enclose the Tyr recombinase domain; it reads AEKKTEKPEI…KTVLTLEKYR (155 aa). Catalysis depends on residues Lys-150 and Arg-211. The active-site O-(3'-phospho-DNA)-tyrosine intermediate is Tyr-243.

The protein belongs to the 'phage' integrase family. XerD-like subfamily.

The protein resides in the cytoplasm. Putative tyrosine recombinase. Not involved in the cutting and rejoining of the recombining DNA molecules on dif(SL) site. This is Tyrosine recombinase XerD-like from Streptococcus pneumoniae serotype 2 (strain D39 / NCTC 7466).